The chain runs to 506 residues: Glucan endo-1,3-beta-glucosidase 13 (506 aa).

Residues 1–22 (MARDFKLIFSISILLLLLDCCY) form the signal peptide. Asparagine 70 is a glycosylation site (N-linked (GlcNAc...) asparagine). Residue glutamate 119 is the Proton donor of the active site. N-linked (GlcNAc...) asparagine glycosylation is found at asparagine 127, asparagine 175, and asparagine 212. Glutamate 264 acts as the Nucleophile in catalysis. Residues asparagine 356 and asparagine 361 are each glycosylated (N-linked (GlcNAc...) asparagine). The cysteines at positions 370 and 433 are disulfide-linked. N-linked (GlcNAc...) asparagine glycosylation is found at asparagine 459 and asparagine 465. The GPI-anchor amidated serine moiety is linked to residue serine 471. Residues 472–506 (SASTPRGNELLQWILKLCLMISLFFSLQTMNSQAL) constitute a propeptide, removed in mature form.

The protein belongs to the glycosyl hydrolase 17 family. Post-translationally, contains two additional disulfide bonds.

Its subcellular location is the secreted. It is found in the cell wall. The protein resides in the cell membrane. It carries out the reaction Hydrolysis of (1-&gt;3)-beta-D-glucosidic linkages in (1-&gt;3)-beta-D-glucans.. The chain is Glucan endo-1,3-beta-glucosidase 13 from Arabidopsis thaliana (Mouse-ear cress).